We begin with the raw amino-acid sequence, 356 residues long: Phenylalanine--tRNA ligase alpha subunit (356 aa).

A Mg(2+)-binding site is contributed by Glu-258.

The protein belongs to the class-II aminoacyl-tRNA synthetase family. Phe-tRNA synthetase alpha subunit type 1 subfamily. As to quaternary structure, tetramer of two alpha and two beta subunits. Mg(2+) is required as a cofactor.

The protein localises to the cytoplasm. It catalyses the reaction tRNA(Phe) + L-phenylalanine + ATP = L-phenylalanyl-tRNA(Phe) + AMP + diphosphate + H(+). The chain is Phenylalanine--tRNA ligase alpha subunit from Macrococcus caseolyticus (strain JCSC5402) (Macrococcoides caseolyticum).